We begin with the raw amino-acid sequence, 145 residues long: Large ribosomal subunit protein uL16 (145 aa).

It belongs to the universal ribosomal protein uL16 family. As to quaternary structure, part of the 50S ribosomal subunit.

Binds 23S rRNA and is also seen to make contacts with the A and possibly P site tRNAs. The chain is Large ribosomal subunit protein uL16 from Shouchella clausii (strain KSM-K16) (Alkalihalobacillus clausii).